Consider the following 104-residue polypeptide: L-rhamnose mutarotase (104 aa).

Y18 is a binding site for substrate. H22 (proton donor) is an active-site residue. Residues Y41 and 76 to 77 (WW) each bind substrate.

The protein belongs to the rhamnose mutarotase family. As to quaternary structure, homodimer.

The protein localises to the cytoplasm. The enzyme catalyses alpha-L-rhamnose = beta-L-rhamnose. It participates in carbohydrate metabolism; L-rhamnose metabolism. Involved in the anomeric conversion of L-rhamnose. In Citrobacter koseri (strain ATCC BAA-895 / CDC 4225-83 / SGSC4696), this protein is L-rhamnose mutarotase.